We begin with the raw amino-acid sequence, 488 residues long: Cobyric acid synthase (488 aa).

A GATase cobBQ-type domain is found at 248–441 (VLRVVVPALP…VHGLFDAPDA (194 aa)). Cys-328 functions as the Nucleophile in the catalytic mechanism. Residue His-433 is part of the active site.

It belongs to the CobB/CobQ family. CobQ subfamily.

The protein operates within cofactor biosynthesis; adenosylcobalamin biosynthesis. Its function is as follows. Catalyzes amidations at positions B, D, E, and G on adenosylcobyrinic A,C-diamide. NH(2) groups are provided by glutamine, and one molecule of ATP is hydrogenolyzed for each amidation. This is Cobyric acid synthase from Burkholderia ambifaria (strain ATCC BAA-244 / DSM 16087 / CCUG 44356 / LMG 19182 / AMMD) (Burkholderia cepacia (strain AMMD)).